A 488-amino-acid chain; its full sequence is MEKSWFNFMFSKGELEYRGELSKAMDSFAPGEKTTISQDRFIYDMDKNFYGWDERSSYSSSYSNNVDLLVSSKDIRNFISDDTFFVRDSNKNSYSIFFDKKKKIFEIDNDFSDLEKFFYSYCSSSYLNNRSKGDNDLHYDPYIKDTKYNCTNHINSCIDSYFRSYICIDNNFLIDSNNFNESYIYNFICSESGKIRESKNYKIRTNRNRSNLISSKDFDITQNYNQLWIQCDNCYGLMYKKVKMNVCEQCGHYLKMSSSERIELLIDPGTWNPMDEDMVSADPIKFHSKEEPYKNRIDSAQKTTGLTDAVQTGTGQLNGIPVALGVMDFRFMGGSMGSVVGEKITRLIEYATNQCLPLILVCSSGGARMQEGSLSLMQMAKISSVLCDYQSSKKLFYISILTSPTTGGVTASFGMLGDIIIAEPYAYIAFAGKRVIEQTLKKAVPEGSQAAESLLRKGLLDAIVPRNLLKGVLSELFQLHAFFPLNTN.

In terms of domain architecture, CoA carboxyltransferase N-terminal spans 227–488; the sequence is LWIQCDNCYG…LHAFFPLNTN (262 aa). Cys231, Cys234, Cys247, and Cys250 together coordinate Zn(2+). The C4-type zinc-finger motif lies at 231–250; it reads CDNCYGLMYKKVKMNVCEQC.

This sequence belongs to the AccD/PCCB family. In terms of assembly, acetyl-CoA carboxylase is a heterohexamer composed of biotin carboxyl carrier protein, biotin carboxylase and 2 subunits each of ACCase subunit alpha and ACCase plastid-coded subunit beta (accD). Zn(2+) serves as cofactor. In terms of tissue distribution, accumulates in fatty acids synthesizing tissues such as embryos, expanding leaves, flower buds, flowers, and developing siliques.

Its subcellular location is the plastid. The protein localises to the chloroplast membrane. The protein resides in the chloroplast stroma. It carries out the reaction N(6)-carboxybiotinyl-L-lysyl-[protein] + acetyl-CoA = N(6)-biotinyl-L-lysyl-[protein] + malonyl-CoA. Its pathway is lipid metabolism; malonyl-CoA biosynthesis; malonyl-CoA from acetyl-CoA: step 1/1. Functionally, component of the acetyl coenzyme A carboxylase (ACC) complex. Biotin carboxylase (BC) catalyzes the carboxylation of biotin on its carrier protein (BCCP) and then the CO(2) group is transferred by the transcarboxylase to acetyl-CoA to form malonyl-CoA. The chain is Acetyl-coenzyme A carboxylase carboxyl transferase subunit beta, chloroplastic from Arabidopsis thaliana (Mouse-ear cress).